We begin with the raw amino-acid sequence, 837 residues long: Protein translocase subunit SecA 1 (837 aa).

Residues Gln-85, 103-107, and Asp-492 each bind ATP; that span reads GEGKT. The segment covering 787-806 has biased composition (basic and acidic residues); sequence QEVAKGEAVHPKEDGEEPKR. Positions 787–811 are disordered; that stretch reads QEVAKGEAVHPKEDGEEPKRKPVRK. Residues Cys-821, Cys-823, Cys-832, and Cys-833 each coordinate Zn(2+).

Belongs to the SecA family. In terms of assembly, monomer and homodimer. Part of the essential Sec protein translocation apparatus which comprises SecA, SecYEG and auxiliary proteins SecDF. Other proteins may also be involved. Requires Zn(2+) as cofactor.

The protein resides in the cell membrane. It is found in the cytoplasm. The catalysed reaction is ATP + H2O + cellular proteinSide 1 = ADP + phosphate + cellular proteinSide 2.. Part of the Sec protein translocase complex. Interacts with the SecYEG preprotein conducting channel. Has a central role in coupling the hydrolysis of ATP to the transfer of proteins into and across the cell membrane, serving as an ATP-driven molecular motor driving the stepwise translocation of polypeptide chains across the membrane. This chain is Protein translocase subunit SecA 1, found in Geobacillus kaustophilus (strain HTA426).